Reading from the N-terminus, the 491-residue chain is Dipeptide and tripeptide permease B (491 aa).

Topologically, residues 1-26 (MNNTAPGLLHQPKPFFMIFFVELWER) are cytoplasmic. The chain crosses the membrane as a helical span at residues 27-47 (FGYYGVQGILAVFFVKQLGFS). Over 48 to 51 (QEQA) the chain is Periplasmic. Residues 52-72 (FITFGAFAALVYGLISIGGYV) traverse the membrane as a helical segment. Residues 73–81 (GDHLLGTKR) lie on the Cytoplasmic side of the membrane. A helical transmembrane segment spans residues 82–102 (TMVLGAIVLALGYFMTGMSLL). The Periplasmic portion of the chain corresponds to 103 to 105 (KPE). The helical transmembrane segment at 106-126 (MIFIALGTIAVGNGLFKANPA) threads the bilayer. Over 127–145 (SLLSKCYPPKDPRLDGAFT) the chain is Cytoplasmic. Residues 146 to 166 (LFYMSINIGSLLSLSLAPIIA) traverse the membrane as a helical segment. Topologically, residues 167-171 (ERFGY) are periplasmic. A helical membrane pass occupies residues 172–192 (AVTYNLCGLGLIIALLVYFAC). The Cytoplasmic portion of the chain corresponds to 193–210 (RGMVRSIGSAPDHQPLNY). Residues 211-231 (GKLLLVLAGAVVMIFLCAWLM) traverse the membrane as a helical segment. A topological domain (periplasmic) is located at residue histidine 232. Residues 233–253 (NVGVANIVLIAVSAVVLYFFF) traverse the membrane as a helical segment. The Cytoplasmic portion of the chain corresponds to 254-266 (REAFKQDKTGRNR). Residues 267 to 287 (MFVAFILMIEAVLFYILYAQM) traverse the membrane as a helical segment. Over 288–312 (PTSLNFFAINNVRHELLGFAINPVS) the chain is Periplasmic. The chain crosses the membrane as a helical span at residues 313 to 335 (FQALNPFWVVVASPILASIYTRL). Residues 336–349 (GSRGRDMTMPTKFT) lie on the Cytoplasmic side of the membrane. The helical transmembrane segment at 350 to 370 (LGMLLCSLGFLTAAAAGMWFA) threads the bilayer. Residues 371–378 (DAQGLTSP) are Periplasmic-facing. A helical transmembrane segment spans residues 379–399 (WFVVLVYLFQSLGELMISALG). At 400–423 (LAMVAALVPQYLMGFILGMWFLTQ) the chain is on the cytoplasmic side. Residues 424 to 444 (AAAFLLGGYVATFTAVPAGIH) traverse the membrane as a helical segment. Residues 445-454 (DPLQTLPIYT) are Periplasmic-facing. The helical transmembrane segment at 455–475 (GVFGKIGIATLIVTLVMAAMV) threads the bilayer. Residues 476 to 491 (PWLNRMMNTPADGQKA) are Cytoplasmic-facing.

This sequence belongs to the major facilitator superfamily. Proton-dependent oligopeptide transporter (POT/PTR) (TC 2.A.17) family. DtpB subfamily.

It localises to the cell inner membrane. Functionally, proton-dependent permease that transports di- and tripeptides. The sequence is that of Dipeptide and tripeptide permease B from Edwardsiella piscicida.